The following is a 281-amino-acid chain: Bifunctional protein FolD (281 aa).

Residues 165–167, threonine 192, and valine 233 each bind NADP(+); that span reads GRG.

This sequence belongs to the tetrahydrofolate dehydrogenase/cyclohydrolase family. Homodimer.

It catalyses the reaction (6R)-5,10-methylene-5,6,7,8-tetrahydrofolate + NADP(+) = (6R)-5,10-methenyltetrahydrofolate + NADPH. The enzyme catalyses (6R)-5,10-methenyltetrahydrofolate + H2O = (6R)-10-formyltetrahydrofolate + H(+). It functions in the pathway one-carbon metabolism; tetrahydrofolate interconversion. Catalyzes the oxidation of 5,10-methylenetetrahydrofolate to 5,10-methenyltetrahydrofolate and then the hydrolysis of 5,10-methenyltetrahydrofolate to 10-formyltetrahydrofolate. This is Bifunctional protein FolD from Mycobacterium tuberculosis (strain ATCC 25177 / H37Ra).